The chain runs to 140 residues: Baculoviral IAP repeat-containing protein 5 (140 aa).

One copy of the BIR repeat lies at 18–88; it reads RIATFKNWPF…KHSPGCAFLT (71 aa). The residue at position 23 (Lys-23) is an N6-acetyllysine. Thr-34 bears the Phosphothreonine; by CDK1 and CDK15 mark. A Phosphothreonine modification is found at Thr-48. Positions 57, 60, 76, 77, 80, and 84 each coordinate Zn(2+). N6-acetyllysine is present on residues Lys-90, Lys-110, Lys-112, and Lys-115. Residues 113–129 show a composition bias toward basic and acidic residues; that stretch reads IAKETNNKQKEFEETAK. The tract at residues 113–140 is disordered; sequence IAKETNNKQKEFEETAKTTRQSIEQLAA. Thr-117 bears the Phosphothreonine; by AURKB mark. Lys-129 carries the N6-acetyllysine modification. Residues 130 to 140 are compositionally biased toward polar residues; that stretch reads TTRQSIEQLAA.

It belongs to the IAP family. As to quaternary structure, monomer or homodimer. Exists as a homodimer in the apo state and as a monomer in the CPC-bound state. The monomer protects cells against apoptosis more efficiently than the dimer. Only the dimeric form is capable of enhancing tubulin stability in cells. When phosphorylated, interacts with LAMTOR5/HBXIP; the resulting complex binds pro-CASP9, as well as active CASP9, but much less efficiently. Component of the chromosomal passenger complex (CPC) composed of at least BIRC5/survivin, CDCA8/borealin, INCENP, AURKB or AURKC; in the complex forms a triple-helix bundle-based subcomplex with INCENP and CDCA8. Interacts with JTB. Interacts (via BIR domain) with histone H3 phosphorylated at 'Thr-3' (H3pT3). Interacts with EVI5. Interacts with GTP-bound RAN in both the S and M phases of the cell cycle. Interacts with USP9X. Interacts with tubulin. Interacts with BIRC2/c-IAP1. The acetylated form at Lys-129 interacts with STAT3. The monomeric form deacetylated at Lys-129 interacts with XPO1/CRM1. The monomeric form interacts with XIAP/BIRC4. Both the dimeric and monomeric form can interact with DIABLO/SMAC. Interacts with BIRC6/bruce. Interacts with FBXL7; this interaction facilitates the polyubiquitination and subsequent proteasomal degradation of BIRC5 by the SCF(FBXL7) E3 ubiquitin-protein ligase complex. Ubiquitinated by the Cul9-RING ubiquitin-protein ligase complex, leading to its degradation. Ubiquitination is required for centrosomal targeting. Deubiquitinated by USP35 or USP38; leading to stabilization. Post-translationally, acetylation at Lys-129 results in its homodimerization, while deacetylation promotes the formation of monomers which heterodimerize with XPO1/CRM1 which facilitates its nuclear export. The acetylated form represses STAT3 transactivation. The dynamic equilibrium between its acetylation and deacetylation at Lys-129 determines its interaction with XPO1/CRM1, its subsequent subcellular localization, and its ability to inhibit STAT3 transactivation. In terms of processing, in vitro phosphorylation at Thr-117 by AURKB prevents interaction with INCENP and localization to mitotic chromosomes. Phosphorylation at Thr-48 by CK2 is critical for its mitotic and anti-apoptotic activities. Phosphorylation at Thr-34 by CDK15 is critical for its anti-apoptotic activity.

It is found in the cytoplasm. Its subcellular location is the nucleus. The protein resides in the chromosome. It localises to the centromere. The protein localises to the cytoskeleton. It is found in the spindle. Its subcellular location is the kinetochore. The protein resides in the midbody. Its function is as follows. Multitasking protein that has dual roles in promoting cell proliferation and preventing apoptosis. Component of a chromosome passage protein complex (CPC) which is essential for chromosome alignment and segregation during mitosis and cytokinesis. Acts as an important regulator of the localization of this complex; directs CPC movement to different locations from the inner centromere during prometaphase to midbody during cytokinesis and participates in the organization of the center spindle by associating with polymerized microtubules. Involved in the recruitment of CPC to centromeres during early mitosis via association with histone H3 phosphorylated at 'Thr-3' (H3pT3) during mitosis. The complex with RAN plays a role in mitotic spindle formation by serving as a physical scaffold to help deliver the RAN effector molecule TPX2 to microtubules. May counteract a default induction of apoptosis in G2/M phase. The acetylated form represses STAT3 transactivation of target gene promoters. May play a role in neoplasia. Inhibitor of CASP3 and CASP7. Essential for the maintenance of mitochondrial integrity and function. This chain is Baculoviral IAP repeat-containing protein 5 (Birc5), found in Mus musculus (Mouse).